The sequence spans 878 residues: Pyruvate dehydrogenase phosphatase regulatory subunit, mitochondrial (878 aa).

A mitochondrion-targeting transit peptide spans 1-93 (MLYRLLSIVQ…CAGILSTARH (93 aa)).

Belongs to the GcvT family. As to quaternary structure, heterodimer of a catalytic (PDP1) and a regulatory (PDPR) subunit.

Its subcellular location is the mitochondrion matrix. Functionally, decreases the sensitivity of PDP1 to magnesium ions, and this inhibition is reversed by the polyamine spermine. The sequence is that of Pyruvate dehydrogenase phosphatase regulatory subunit, mitochondrial (Pdpr) from Mus musculus (Mouse).